Reading from the N-terminus, the 234-residue chain is ATP synthase subunit a 1 (234 aa).

5 consecutive transmembrane segments (helical) span residues 20 to 40, 76 to 96, 105 to 125, 162 to 184, and 195 to 215; these read ETVV…ILLT, LLPL…LGVI, DLSV…AYGV, LFGN…GFLA, and EALV…AGAM.

Belongs to the ATPase A chain family. In terms of assembly, F-type ATPases have 2 components, CF(1) - the catalytic core - and CF(0) - the membrane proton channel. CF(1) has five subunits: alpha(3), beta(3), gamma(1), delta(1), epsilon(1). CF(0) has three main subunits: a(1), b(2) and c(9-12). The alpha and beta chains form an alternating ring which encloses part of the gamma chain. CF(1) is attached to CF(0) by a central stalk formed by the gamma and epsilon chains, while a peripheral stalk is formed by the delta and b chains.

It is found in the cell inner membrane. In terms of biological role, key component of the proton channel; it plays a direct role in the translocation of protons across the membrane. The chain is ATP synthase subunit a 1 from Hahella chejuensis (strain KCTC 2396).